Consider the following 394-residue polypeptide: Elongation factor Tu (394 aa).

One can recognise a tr-type G domain in the interval 10 to 205; that stretch reads KPHMNVGTIG…TMDNYFDLPE (196 aa). The interval 19–26 is G1; sequence GHVDHGKT. 19–26 is a binding site for GTP; that stretch reads GHVDHGKT. Residue Thr26 participates in Mg(2+) binding. The tract at residues 61–65 is G2; it reads GITIN. The segment at 82 to 85 is G3; sequence DCPG. GTP contacts are provided by residues 82–86 and 137–140; these read DCPGH and NKLD. The tract at residues 137–140 is G4; sequence NKLD. Residues 173 to 175 are G5; that stretch reads SAF.

It belongs to the TRAFAC class translation factor GTPase superfamily. Classic translation factor GTPase family. EF-Tu/EF-1A subfamily. In terms of assembly, monomer.

Its subcellular location is the cytoplasm. It catalyses the reaction GTP + H2O = GDP + phosphate + H(+). GTP hydrolase that promotes the GTP-dependent binding of aminoacyl-tRNA to the A-site of ribosomes during protein biosynthesis. The chain is Elongation factor Tu from Borrelia duttonii (strain Ly).